We begin with the raw amino-acid sequence, 125 residues long: Small ribosomal subunit protein eS8 (125 aa).

Residues 1-36 (MKDQGRSTRKRTGGRLHDVSKKKRHQLGREPAETTV) are disordered. Positions 7 to 26 (STRKRTGGRLHDVSKKKRHQ) are enriched in basic residues. A compositionally biased stretch (basic and acidic residues) spans 27–36 (LGREPAETTV).

This sequence belongs to the eukaryotic ribosomal protein eS8 family. Part of the 30S ribosomal subunit.

The sequence is that of Small ribosomal subunit protein eS8 from Haloquadratum walsbyi (strain DSM 16790 / HBSQ001).